The primary structure comprises 90 residues: MKTAIFTVVLALAVFAVLSFGWEANGKALSEEFTELIHEKEAASETEARECRYFWGECHDHMPCCDWLVCRYKWPITYNICVWNRTFPEK.

The first 26 residues, 1 to 26 (MKTAIFTVVLALAVFAVLSFGWEANG), serve as a signal peptide directing secretion. A propeptide spanning residues 27-50 (KALSEEFTELIHEKEAASETEARE) is cleaved from the precursor. 3 disulfides stabilise this stretch: C51–C65, C58–C70, and C64–C81.

Belongs to the neurotoxin 10 (Hwtx-1) family. 13 (Hntx-13) subfamily. As to expression, expressed by the venom gland.

Its subcellular location is the secreted. Functionally, ion channel inhibitor. The chain is U7-theraphotoxin-Hhn1a 3 from Cyriopagopus hainanus (Chinese bird spider).